Here is a 170-residue protein sequence, read N- to C-terminus: Macro domain-containing protein DR_2288 (170 aa).

The Macro domain maps to 1–170 (MPLELVQGDI…HVFERALAQL (170 aa)).

Belongs to the MacroD-type family.

This Deinococcus radiodurans (strain ATCC 13939 / DSM 20539 / JCM 16871 / CCUG 27074 / LMG 4051 / NBRC 15346 / NCIMB 9279 / VKM B-1422 / R1) protein is Macro domain-containing protein DR_2288.